Consider the following 503-residue polypeptide: Aspartyl/glutamyl-tRNA(Asn/Gln) amidotransferase subunit B (503 aa).

Belongs to the GatB/GatE family. GatB subfamily. In terms of assembly, heterotrimer of A, B and C subunits.

It carries out the reaction L-glutamyl-tRNA(Gln) + L-glutamine + ATP + H2O = L-glutaminyl-tRNA(Gln) + L-glutamate + ADP + phosphate + H(+). The enzyme catalyses L-aspartyl-tRNA(Asn) + L-glutamine + ATP + H2O = L-asparaginyl-tRNA(Asn) + L-glutamate + ADP + phosphate + 2 H(+). In terms of biological role, allows the formation of correctly charged Asn-tRNA(Asn) or Gln-tRNA(Gln) through the transamidation of misacylated Asp-tRNA(Asn) or Glu-tRNA(Gln) in organisms which lack either or both of asparaginyl-tRNA or glutaminyl-tRNA synthetases. The reaction takes place in the presence of glutamine and ATP through an activated phospho-Asp-tRNA(Asn) or phospho-Glu-tRNA(Gln). The polypeptide is Aspartyl/glutamyl-tRNA(Asn/Gln) amidotransferase subunit B (Cereibacter sphaeroides (strain KD131 / KCTC 12085) (Rhodobacter sphaeroides)).